We begin with the raw amino-acid sequence, 100 residues long: Guanine nucleotide exchange factor MSS4 homolog (100 aa).

Positions 1–100 (MSNLRIVCQH…YLLLCSLEKN (100 aa)) constitute an MSS4 domain. 4 residues coordinate Zn(2+): C8, C11, C73, and C76.

It belongs to the DSS4/MSS4 family.

Its function is as follows. Guanine-nucleotide-releasing protein that acts on members of the sec4/ypt1/rab subfamily. The polypeptide is Guanine nucleotide exchange factor MSS4 homolog (Schizosaccharomyces pombe (strain 972 / ATCC 24843) (Fission yeast)).